A 196-amino-acid polypeptide reads, in one-letter code: DnaA initiator-associating protein DiaA (196 aa).

The 163-residue stretch at 34–196 folds into the SIS domain; the sequence is LVQSLLNGNK…DNTLFPHQDD (163 aa).

It belongs to the SIS family. DiaA subfamily. As to quaternary structure, homotetramer; dimer of dimers.

In terms of biological role, required for the timely initiation of chromosomal replication via direct interactions with the DnaA initiator protein. The sequence is that of DnaA initiator-associating protein DiaA from Yersinia enterocolitica serotype O:8 / biotype 1B (strain NCTC 13174 / 8081).